The chain runs to 89 residues: Pigment-dispersing hormone peptides (89 aa).

Residues 1 to 22 (MTAMAVSGKLLTALVLSTYILG) form the signal peptide. Ala-86 bears the Alanine amide mark.

Belongs to the arthropod PDH family.

The protein resides in the secreted. In terms of biological role, capable of inducing pigment dispersion in the chromatophores of the fiddler crab Uca pugilator. This is Pigment-dispersing hormone peptides from Romalea microptera (Eastern lubber grasshopper).